A 494-amino-acid polypeptide reads, in one-letter code: MKYHDLRDFLALLEQQGELKRITLPVDPYLEMTEIADRTLRAGGPALLFENPKGHTMPVLCNLFGTPKRVAMGMGQEDISALREVGKLLAFLKEPEPPRGFRDLFDKLPQFKQVLNMPTKRLRNAPCQEKVWQGDEVDLNRIPIMQCWPDDAAPLITWGLTVTRGPHKERQNLGIYRQQLIGKNKLIMRWLSHRGGALDFQEWCQAHPGERFPVAVALGADPATILGAVTPVPDTLSEYAFAGLLRGTKTEVVKCLSNDLEIPASAEIVLEGYIEPGEMAPEGPYGDHTGYYNEIDNFPVFTVTHVTQRENAIYHSTYTGRPPDEPAVLGVALNEVLVPILQKQFPEIVDFYLPPEGCSYRLAVVTMRKQYAGHAKRVMMGVWSFLRQFMYTKFVIVCDDDINARDWNDVIWAITTRMDPARDTVMVENTPIDYLDFASPVSGLGSKMGLDATNKWPGETQREWGTPIKKDPNVTARIDAIWDELAIFHDGKGA.

Residue Asn172 coordinates Mn(2+). Residues 175–177, 189–191, and 194–195 each bind prenylated FMN; these read IYR, RWL, and RG. Residue Glu238 participates in Mn(2+) binding. The active-site Proton donor is Asp287.

This sequence belongs to the UbiD family. In terms of assembly, homohexamer. The cofactor is prenylated FMN. Requires Mn(2+) as cofactor.

It localises to the cell membrane. It catalyses the reaction a 4-hydroxy-3-(all-trans-polyprenyl)benzoate + H(+) = a 2-(all-trans-polyprenyl)phenol + CO2. It functions in the pathway cofactor biosynthesis; ubiquinone biosynthesis. In terms of biological role, catalyzes the decarboxylation of 3-octaprenyl-4-hydroxy benzoate to 2-octaprenylphenol, an intermediate step in ubiquinone biosynthesis. This is 3-octaprenyl-4-hydroxybenzoate carboxy-lyase from Cronobacter sakazakii (strain ATCC BAA-894) (Enterobacter sakazakii).